The primary structure comprises 314 residues: tRNA dimethylallyltransferase (314 aa).

Residue 11-18 coordinates ATP; that stretch reads GPTGSGKT. 13-18 is a binding site for substrate; it reads TGSGKT. The tract at residues 36 to 39 is interaction with substrate tRNA; it reads DSMQ.

This sequence belongs to the IPP transferase family. In terms of assembly, monomer. Requires Mg(2+) as cofactor.

The enzyme catalyses adenosine(37) in tRNA + dimethylallyl diphosphate = N(6)-dimethylallyladenosine(37) in tRNA + diphosphate. Functionally, catalyzes the transfer of a dimethylallyl group onto the adenine at position 37 in tRNAs that read codons beginning with uridine, leading to the formation of N6-(dimethylallyl)adenosine (i(6)A). The protein is tRNA dimethylallyltransferase of Chlamydia muridarum (strain MoPn / Nigg).